Here is a 363-residue protein sequence, read N- to C-terminus: uncharacterized protein (363 aa).

The disordered stretch occupies residues 35 to 262; sequence TVPGPPGAES…GLSPCCGDGG (228 aa). Polar residues predominate over residues 56–75; that stretch reads AVSSSRNPNSAGRTPNSYLT. Positions 100–116 are enriched in low complexity; sequence GADPALGSLPAAGLSGL.

This is an uncharacterized protein from Homo sapiens (Human).